A 226-amino-acid polypeptide reads, in one-letter code: Endonuclease V (226 aa).

Residues Asp-42 and Asp-110 each contribute to the Mg(2+) site.

It belongs to the endonuclease V family. The cofactor is Mg(2+).

The protein resides in the cytoplasm. The enzyme catalyses Endonucleolytic cleavage at apurinic or apyrimidinic sites to products with a 5'-phosphate.. In terms of biological role, DNA repair enzyme involved in the repair of deaminated bases. Selectively cleaves double-stranded DNA at the second phosphodiester bond 3' to a deoxyinosine leaving behind the intact lesion on the nicked DNA. This chain is Endonuclease V, found in Thermus thermophilus (strain ATCC BAA-163 / DSM 7039 / HB27).